The chain runs to 527 residues: Calcium and calcium/calmodulin-dependent serine/threonine-protein kinase (527 aa).

Residues 12 to 314 (YEVSEILGRG…AQELLSDPWV (303 aa)) form the Protein kinase domain. Position 18–26 (18–26 (LGRGGFSVV)) interacts with ATP. The disordered stretch occupies residues 25–51 (VVRKGTRKSNNDDEKSQSQSKSQSQSQ). Positions 41 to 51 (QSQSKSQSQSQ) are enriched in low complexity. An ATP-binding site is contributed by Lys55. A disordered region spans residues 59-78 (RLGTSNNLPRKKDGGENSTE). Catalysis depends on Asp179, which acts as the Proton acceptor. A helical membrane pass occupies residues 239–255 (MWSLGVILYILLSGYPP). Thr279 bears the Phosphothreonine mark. The tract at residues 337–350 (ARRKLRAAAIASVW) is calmodulin-binding. A coiled-coil region spans residues 358–379 (TKKLKSLVGSYDLKEDEIENLR). 3 EF-hand domains span residues 408–443 (SLIP…LKNS), 444–479 (KGED…LPYD), and 486–521 (TEPG…DSSL). The Ca(2+) site is built by Asp421, Asn423, Asp425, Thr427, Glu432, Asp457, Asp459, Ser461, Cys463, Glu468, Asp499, Asn501, Asp503, Lys505, and Glu510.

It belongs to the protein kinase superfamily. CAMK Ser/Thr protein kinase family. CaMK subfamily. In terms of processing, autophosphorylation.

Its subcellular location is the membrane. The catalysed reaction is L-seryl-[protein] + ATP = O-phospho-L-seryl-[protein] + ADP + H(+). It catalyses the reaction L-threonyl-[protein] + ATP = O-phospho-L-threonyl-[protein] + ADP + H(+). With respect to regulation, activated by calcium. Autophosphorylation may play an important role in the regulation of the kinase activity. Functionally, protein kinase that recognizes the calcium spiking induced by Nod factors and translates this signal to components controlling nodulation and mycorrhizal infection responses. In Pisum sativum (Garden pea), this protein is Calcium and calcium/calmodulin-dependent serine/threonine-protein kinase (SYM9).